The following is a 343-amino-acid chain: Glycerol-3-phosphate dehydrogenase [NAD(P)+] (343 aa).

NADPH contacts are provided by tryptophan 29, arginine 49, and lysine 122. Sn-glycerol 3-phosphate-binding residues include lysine 122, glycine 150, and serine 152. Alanine 154 contributes to the NADPH binding site. Sn-glycerol 3-phosphate is bound by residues lysine 205, aspartate 258, serine 268, arginine 269, and asparagine 270. The Proton acceptor role is filled by lysine 205. Arginine 269 serves as a coordination point for NADPH. Positions 288 and 290 each coordinate NADPH.

The protein belongs to the NAD-dependent glycerol-3-phosphate dehydrogenase family.

It localises to the cytoplasm. The catalysed reaction is sn-glycerol 3-phosphate + NAD(+) = dihydroxyacetone phosphate + NADH + H(+). It catalyses the reaction sn-glycerol 3-phosphate + NADP(+) = dihydroxyacetone phosphate + NADPH + H(+). It functions in the pathway membrane lipid metabolism; glycerophospholipid metabolism. Functionally, catalyzes the reduction of the glycolytic intermediate dihydroxyacetone phosphate (DHAP) to sn-glycerol 3-phosphate (G3P), the key precursor for phospholipid synthesis. The polypeptide is Glycerol-3-phosphate dehydrogenase [NAD(P)+] (Mesorhizobium japonicum (strain LMG 29417 / CECT 9101 / MAFF 303099) (Mesorhizobium loti (strain MAFF 303099))).